The sequence spans 171 residues: S-ribosylhomocysteine lyase (171 aa).

Fe cation is bound by residues histidine 54, histidine 58, and cysteine 128.

The protein belongs to the LuxS family. As to quaternary structure, homodimer. Fe cation is required as a cofactor.

It catalyses the reaction S-(5-deoxy-D-ribos-5-yl)-L-homocysteine = (S)-4,5-dihydroxypentane-2,3-dione + L-homocysteine. In terms of biological role, involved in the synthesis of autoinducer 2 (AI-2) which is secreted by bacteria and is used to communicate both the cell density and the metabolic potential of the environment. The regulation of gene expression in response to changes in cell density is called quorum sensing. Catalyzes the transformation of S-ribosylhomocysteine (RHC) to homocysteine (HC) and 4,5-dihydroxy-2,3-pentadione (DPD). This is S-ribosylhomocysteine lyase from Campylobacter concisus (strain 13826).